Here is a 432-residue protein sequence, read N- to C-terminus: MSELKDCPLQFHDFKSVDHLKVCPRYTAVLARSEDDGIGIEELDTLQLELETLLSSASRRLRVLEAETQILTDWQDKKGDRRFLKLGRDHELGAPPKHGKPKKQKLEGKAGHGPGPGPGRPKSKNLQPKVQEYEFTDDPIDVPRIPKNDAPNRFWASVEPYCADITSEEVRTLEELLKPPEDEAEHYKIPPLGKHYSQRWAQEDLLEEQKDGARAAAVADKKKGLMGPLTELDTKDVDALPKKSEAQHEQPEDGCPFGALTQRLLQALVEENIISPMEDSPIPDMSGKESGADGASTSPRNQNKPFSVPHTKSLESRIKEELIAQGLLESEDRPAEDSEDEVLAELRKRQAELKALSAHNRTKKHDLLRLAKEEVSRQELRQRVRMADNEVMDAFRKIMAARQKKRTPTKKEKDQAWKTLKERESILKLLDG.

Lys-21 is covalently cross-linked (Glycyl lysine isopeptide (Lys-Gly) (interchain with G-Cter in SUMO2)). Positions 40–69 form a coiled coil; sequence IEELDTLQLELETLLSSASRRLRVLEAETQ. The interval 87–127 is disordered; the sequence is GRDHELGAPPKHGKPKKQKLEGKAGHGPGPGPGRPKSKNLQ. Residue Lys-129 forms a Glycyl lysine isopeptide (Lys-Gly) (interchain with G-Cter in SUMO2) linkage. Basic and acidic residues-rich tracts occupy residues 211–223 and 232–251; these read DGAR…DKKK and LDTK…HEQP. 2 disordered regions span residues 211–257 and 271–319; these read DGAR…GCPF and ENII…SRIK. A phosphoserine mark is found at Ser-280 and Ser-298. Residues 295–305 are compositionally biased toward polar residues; the sequence is ASTSPRNQNKP. The stretch at 367–407 forms a coiled coil; that stretch reads LLRLAKEEVSRQELRQRVRMADNEVMDAFRKIMAARQKKRT. Residue Lys-418 is modified to N6-acetyllysine.

Belongs to the NGG1 family. As to quaternary structure, the PCAF complex is composed of a number of TBP-associated factors (TAFS), such as TAF5, TAF5L, TAF6, TAF6L, TAF9, TAF10 and TAF12, PCAF, and also PCAF-associated factors (PAFs), such as TADA2L/ADA2, TADA3L/ADA3 and SPT3. Interacts directly with TADA2L and PCAF and also with the high-risk HPV oncoprotein E6. Component of the STAGA transcription coactivator-HAT complex, at least composed of SUPT3H, GCN5L2, TAF5L, TAF6L, SUPT7L, TADA3L, TAD1L, TAF10, TAF12, TRRAP and TAF9. Component of the TFTC-HAT complex. Component of the ADA2A-containing complex (ATAC), composed of KAT14, KAT2A, TADA2L, TADA3L, ZZ3, MBIP, WDR5, YEATS2, CCDC101 and DR1.

The protein localises to the nucleus. Functionally, functions as a component of the PCAF complex. The PCAF complex is capable of efficiently acetylating histones in a nucleosomal context. The PCAF complex could be considered as the human version of the yeast SAGA complex. Also known as a coactivator for p53/TP53-dependent transcriptional activation. Component of the ATAC complex, a complex with histone acetyltransferase activity on histones H3 and H4. In Pongo abelii (Sumatran orangutan), this protein is Transcriptional adapter 3 (TADA3).